A 414-amino-acid polypeptide reads, in one-letter code: MSYIEKQEFLAELKTRNILKDISSPEKFFNLKPDQGIYIGFDPTATSLHLGNYISISLLKRLQKIGIKVLAVIGGATGMIGDPSFSSKERKLLDFKTLNANKEKIKKQLESFGLPVFDNFEIYKNMNILDFLRDVGKNINISYLLAKESVASRIEVGLSFTEFSYQLIQGWDFKFLAENYRIIGQAGGSDQWGNMVTGLDFIKKSNLDQKDEAFVFTTNLLTDENGQKFGKSLGKPIWLDPEMYSPFHLYQFLLNQSDEQAEKIMLWLSFLDLKVINELIFKHKKDKKQRILQYNLAKQVVFDIHGDKGLEIAKKITKILFEKLDYTKITFNDKLELKKIIPYFKVSFFNANQIIDLGIFKSKRELNEFISHKALEINGSKISNISDITEELKDKSNLFLLRKGKKYFFMIELI.

An L-tyrosine-binding site is contributed by tyrosine 38. The 'HIGH' region signature appears at 43-52 (PTATSLHLGN). The L-tyrosine site is built by tyrosine 165 and glutamine 169. The 'KMSKS' region motif lies at 228-232 (KFGKS). Lysine 231 serves as a coordination point for ATP. The S4 RNA-binding domain occupies 349 to 414 (FNANQIIDLG…KKYFFMIELI (66 aa)).

The protein belongs to the class-I aminoacyl-tRNA synthetase family. TyrS type 1 subfamily. As to quaternary structure, homodimer.

Its subcellular location is the cytoplasm. The enzyme catalyses tRNA(Tyr) + L-tyrosine + ATP = L-tyrosyl-tRNA(Tyr) + AMP + diphosphate + H(+). In terms of biological role, catalyzes the attachment of tyrosine to tRNA(Tyr) in a two-step reaction: tyrosine is first activated by ATP to form Tyr-AMP and then transferred to the acceptor end of tRNA(Tyr). This is Tyrosine--tRNA ligase from Mesomycoplasma hyopneumoniae (strain 7448) (Mycoplasma hyopneumoniae).